Consider the following 101-residue polypeptide: Large ribosomal subunit protein uL23 (101 aa).

Belongs to the universal ribosomal protein uL23 family. As to quaternary structure, part of the 50S ribosomal subunit. Contacts protein L29, and trigger factor when it is bound to the ribosome.

One of the early assembly proteins it binds 23S rRNA. One of the proteins that surrounds the polypeptide exit tunnel on the outside of the ribosome. Forms the main docking site for trigger factor binding to the ribosome. This is Large ribosomal subunit protein uL23 from Pseudarthrobacter chlorophenolicus (strain ATCC 700700 / DSM 12829 / CIP 107037 / JCM 12360 / KCTC 9906 / NCIMB 13794 / A6) (Arthrobacter chlorophenolicus).